We begin with the raw amino-acid sequence, 746 residues long: Actin filament-associated protein 1-like 1 (746 aa).

The segment at 88–206 (EDQKKEPEAN…RLTHQWPSEE (119 aa)) is disordered. Over residues 98–107 (HTVTKPSKTD) the composition is skewed to polar residues. Positions 108–119 (SPPPLPNTPPPE) are enriched in pro residues. Over residues 139-148 (SRSSSSPPNS) the composition is skewed to low complexity. The region spanning 214-310 (DCHICAFLLR…WLHVVRDVTG (97 aa)) is the PH 1 domain. The segment at 336–371 (EKQTSDSDSMPSGESARDIRENGKPKRGALSELTGT) is disordered. Basic and acidic residues predominate over residues 350–359 (SARDIRENGK). The 92-residue stretch at 406–497 (RCGYVGVLVN…WLGVLLAETG (92 aa)) folds into the PH 2 domain. Disordered regions lie at residues 539–596 (EVPF…TRAQ) and 723–746 (PSIY…KKGT). The segment covering 562–575 (SFSSSDTGKPSPQI) has biased composition (polar residues). Residues 591 to 682 (GKTRAQEDAR…VKENLKKSLA (92 aa)) adopt a coiled-coil conformation. The segment covering 736–746 (KAKEWESKKGT) has biased composition (basic and acidic residues).

It localises to the cytoplasm. The protein resides in the cell projection. It is found in the podosome. The protein localises to the invadopodium. Its subcellular location is the cytoskeleton. It localises to the stress fiber. May be involved in podosome and invadosome formation. The polypeptide is Actin filament-associated protein 1-like 1 (afap1l1) (Danio rerio (Zebrafish)).